A 20-amino-acid chain; its full sequence is Thylakoid lumenal 18.4 kDa protein (20 aa).

The protein localises to the plastid. It is found in the chloroplast thylakoid lumen. This Spinacia oleracea (Spinach) protein is Thylakoid lumenal 18.4 kDa protein.